A 203-amino-acid chain; its full sequence is Ribonuclease HII (203 aa).

In terms of domain architecture, RNase H type-2 spans 18 to 203 (GQYAGVDEVG…SFRPVREALA (186 aa)). Asp-24, Glu-25, and Asp-116 together coordinate a divalent metal cation.

It belongs to the RNase HII family. Requires Mn(2+) as cofactor. Mg(2+) serves as cofactor.

The protein localises to the cytoplasm. The enzyme catalyses Endonucleolytic cleavage to 5'-phosphomonoester.. Functionally, endonuclease that specifically degrades the RNA of RNA-DNA hybrids. The polypeptide is Ribonuclease HII (Shewanella pealeana (strain ATCC 700345 / ANG-SQ1)).